We begin with the raw amino-acid sequence, 185 residues long: Ribosome-recycling factor (185 aa).

It belongs to the RRF family.

It localises to the cytoplasm. Responsible for the release of ribosomes from messenger RNA at the termination of protein biosynthesis. May increase the efficiency of translation by recycling ribosomes from one round of translation to another. This Pectobacterium atrosepticum (strain SCRI 1043 / ATCC BAA-672) (Erwinia carotovora subsp. atroseptica) protein is Ribosome-recycling factor.